A 436-amino-acid chain; its full sequence is 3-ketoacyl-CoA thiolase (436 aa).

Catalysis depends on Cys99, which acts as the Acyl-thioester intermediate. Active-site proton acceptor residues include His392 and Cys422.

Belongs to the thiolase-like superfamily. Thiolase family. As to quaternary structure, heterotetramer of two alpha chains (FadJ) and two beta chains (FadI).

The protein localises to the cytoplasm. It catalyses the reaction an acyl-CoA + acetyl-CoA = a 3-oxoacyl-CoA + CoA. It functions in the pathway lipid metabolism; fatty acid beta-oxidation. Its function is as follows. Catalyzes the final step of fatty acid oxidation in which acetyl-CoA is released and the CoA ester of a fatty acid two carbons shorter is formed. This Salmonella paratyphi A (strain ATCC 9150 / SARB42) protein is 3-ketoacyl-CoA thiolase.